Reading from the N-terminus, the 96-residue chain is MTRRLCEIFKSPRRDEMYLYVDRARGLADMPEALLERFGKPVPVTVLMLSEDKPLARAKASDVLAAIEAQGFYLQMPPARESYLLDLYRAPTEGRY.

The region spanning 4-88 is the YcgL domain; the sequence is RLCEIFKSPR…ARESYLLDLY (85 aa).

This chain is YcgL domain-containing protein Csal_1462, found in Chromohalobacter salexigens (strain ATCC BAA-138 / DSM 3043 / CIP 106854 / NCIMB 13768 / 1H11).